A 208-amino-acid polypeptide reads, in one-letter code: Thymidylate kinase (208 aa).

10–17 (GIDGSGKS) is a binding site for ATP.

This sequence belongs to the thymidylate kinase family.

The enzyme catalyses dTMP + ATP = dTDP + ADP. Phosphorylation of dTMP to form dTDP in both de novo and salvage pathways of dTTP synthesis. In Jannaschia sp. (strain CCS1), this protein is Thymidylate kinase.